Reading from the N-terminus, the 103-residue chain is Small ribosomal subunit protein uS10 (103 aa).

It belongs to the universal ribosomal protein uS10 family. In terms of assembly, part of the 30S ribosomal subunit.

Involved in the binding of tRNA to the ribosomes. The polypeptide is Small ribosomal subunit protein uS10 (Picrophilus torridus (strain ATCC 700027 / DSM 9790 / JCM 10055 / NBRC 100828 / KAW 2/3)).